We begin with the raw amino-acid sequence, 573 residues long: Phosphoenolpyruvate-protein phosphotransferase (573 aa).

H190 (tele-phosphohistidine intermediate) is an active-site residue. The phosphoenolpyruvate site is built by R297 and R333. 2 residues coordinate Mg(2+): E432 and D456. Residues 455–456 and R466 contribute to the phosphoenolpyruvate site; that span reads ND. Residue C503 is the Proton donor of the active site.

The protein belongs to the PEP-utilizing enzyme family. As to quaternary structure, homodimer. Requires Mg(2+) as cofactor.

The protein localises to the cytoplasm. It carries out the reaction L-histidyl-[protein] + phosphoenolpyruvate = N(pros)-phospho-L-histidyl-[protein] + pyruvate. Its function is as follows. General (non sugar-specific) component of the phosphoenolpyruvate-dependent sugar phosphotransferase system (sugar PTS). This major carbohydrate active-transport system catalyzes the phosphorylation of incoming sugar substrates concomitantly with their translocation across the cell membrane. Enzyme I transfers the phosphoryl group from phosphoenolpyruvate (PEP) to the phosphoryl carrier protein (HPr). This is Phosphoenolpyruvate-protein phosphotransferase (ptsI) from Priestia megaterium (Bacillus megaterium).